We begin with the raw amino-acid sequence, 953 residues long: Isoleucine--tRNA ligase (953 aa).

Positions 58–68 (PYANGSIHIGH) match the 'HIGH' region motif. L-isoleucyl-5'-AMP is bound at residue Glu577. The 'KMSKS' region signature appears at 618–622 (KMSKS). Position 621 (Lys621) interacts with ATP. Zn(2+) is bound by residues Cys916, Cys919, Cys936, and Cys939.

The protein belongs to the class-I aminoacyl-tRNA synthetase family. IleS type 1 subfamily. As to quaternary structure, monomer. The cofactor is Zn(2+).

It is found in the cytoplasm. It carries out the reaction tRNA(Ile) + L-isoleucine + ATP = L-isoleucyl-tRNA(Ile) + AMP + diphosphate. Its function is as follows. Catalyzes the attachment of isoleucine to tRNA(Ile). As IleRS can inadvertently accommodate and process structurally similar amino acids such as valine, to avoid such errors it has two additional distinct tRNA(Ile)-dependent editing activities. One activity is designated as 'pretransfer' editing and involves the hydrolysis of activated Val-AMP. The other activity is designated 'posttransfer' editing and involves deacylation of mischarged Val-tRNA(Ile). The protein is Isoleucine--tRNA ligase of Aeromonas hydrophila subsp. hydrophila (strain ATCC 7966 / DSM 30187 / BCRC 13018 / CCUG 14551 / JCM 1027 / KCTC 2358 / NCIMB 9240 / NCTC 8049).